Here is a 145-residue protein sequence, read N- to C-terminus: Small ribosomal subunit protein uS12A (145 aa).

Position 64 is a hydroxyproline (proline 64).

This sequence belongs to the universal ribosomal protein uS12 family.

The polypeptide is Small ribosomal subunit protein uS12A (RPS23A) (Naumovozyma castellii (Yeast)).